A 405-amino-acid polypeptide reads, in one-letter code: Acetate kinase (405 aa).

N7 is a Mg(2+) binding site. Residue K14 participates in ATP binding. R90 contacts substrate. The Proton donor/acceptor role is filled by D147. ATP is bound by residues 207 to 211, 282 to 284, and 330 to 334; these read HLGNG, DMR, and GVGEN. E383 provides a ligand contact to Mg(2+).

Belongs to the acetokinase family. As to quaternary structure, homodimer. The cofactor is Mg(2+). Mn(2+) serves as cofactor.

Its subcellular location is the cytoplasm. It carries out the reaction acetate + ATP = acetyl phosphate + ADP. It functions in the pathway metabolic intermediate biosynthesis; acetyl-CoA biosynthesis; acetyl-CoA from acetate: step 1/2. In terms of biological role, catalyzes the formation of acetyl phosphate from acetate and ATP. Can also catalyze the reverse reaction. This chain is Acetate kinase, found in Pseudothermotoga lettingae (strain ATCC BAA-301 / DSM 14385 / NBRC 107922 / TMO) (Thermotoga lettingae).